We begin with the raw amino-acid sequence, 468 residues long: Sushi repeat-containing protein SRPX2 (468 aa).

Residues 1–25 (MMTSPLTQRGALSLLLLLMPAVTPT) form the signal peptide. Sushi domains follow at residues 72–122 (ATCY…YCRQ), 123–181 (IRCH…VCVD), and 265–324 (RRCP…VCTP). Disulfide bonds link Cys74-Cys108, Cys94-Cys120, Cys125-Cys166, and Cys152-Cys179. The HYR domain occupies 180–264 (VDIDPPKIRC…SCKFIVKVQV (85 aa)). Intrachain disulfides connect Cys267–Cys309 and Cys295–Cys322.

In terms of assembly, forms homooligomers. Interacts with PLAUR (via the UPAR/Ly6 domains), ADAMTS4 and CTSB. Interacts with HGF; the interaction increases the mitogenic activity of HGF. In terms of processing, contains chondroitin sulfate chains. In terms of tissue distribution, expressed in angiogenic endothelial cells (at protein level).

Its subcellular location is the secreted. It localises to the cytoplasm. The protein localises to the cell surface. The protein resides in the synapse. Its function is as follows. Acts as a ligand for the urokinase plasminogen activator surface receptor. Plays a role in angiogenesis by inducing endothelial cell migration and the formation of vascular network (cords). Involved in cellular migration and adhesion. Increases the phosphorylation levels of FAK. Interacts with and increases the mitogenic activity of HGF. Promotes synapse formation. Required for ultrasonic vocalizations. The polypeptide is Sushi repeat-containing protein SRPX2 (Srpx2) (Mus musculus (Mouse)).